We begin with the raw amino-acid sequence, 350 residues long: UDP-3-O-acylglucosamine N-acyltransferase (350 aa).

The Proton acceptor role is filled by H257.

It belongs to the transferase hexapeptide repeat family. LpxD subfamily. As to quaternary structure, homotrimer.

The catalysed reaction is a UDP-3-O-[(3R)-3-hydroxyacyl]-alpha-D-glucosamine + a (3R)-hydroxyacyl-[ACP] = a UDP-2-N,3-O-bis[(3R)-3-hydroxyacyl]-alpha-D-glucosamine + holo-[ACP] + H(+). Its pathway is bacterial outer membrane biogenesis; LPS lipid A biosynthesis. In terms of biological role, catalyzes the N-acylation of UDP-3-O-acylglucosamine using 3-hydroxyacyl-ACP as the acyl donor. Is involved in the biosynthesis of lipid A, a phosphorylated glycolipid that anchors the lipopolysaccharide to the outer membrane of the cell. The chain is UDP-3-O-acylglucosamine N-acyltransferase from Chelativorans sp. (strain BNC1).